An 883-amino-acid polypeptide reads, in one-letter code: DNA mismatch repair protein MutS (883 aa).

Residue 633 to 640 (GPNMGGKS) coordinates ATP.

It belongs to the DNA mismatch repair MutS family.

Its function is as follows. This protein is involved in the repair of mismatches in DNA. It is possible that it carries out the mismatch recognition step. This protein has a weak ATPase activity. In Bordetella pertussis (strain Tohama I / ATCC BAA-589 / NCTC 13251), this protein is DNA mismatch repair protein MutS.